The sequence spans 188 residues: Elongation factor P (188 aa).

Belongs to the elongation factor P family.

It is found in the cytoplasm. The protein operates within protein biosynthesis; polypeptide chain elongation. Involved in peptide bond synthesis. Stimulates efficient translation and peptide-bond synthesis on native or reconstituted 70S ribosomes in vitro. Probably functions indirectly by altering the affinity of the ribosome for aminoacyl-tRNA, thus increasing their reactivity as acceptors for peptidyl transferase. This chain is Elongation factor P, found in Nitrobacter hamburgensis (strain DSM 10229 / NCIMB 13809 / X14).